The following is a 202-amino-acid chain: NADH-quinone oxidoreductase subunit B 2 (202 aa).

4 residues coordinate [4Fe-4S] cluster: Cys-38, Cys-39, Cys-104, and Cys-133.

It belongs to the complex I 20 kDa subunit family. As to quaternary structure, NDH-1 is composed of 14 different subunits. Subunits NuoB, C, D, E, F, and G constitute the peripheral sector of the complex. Requires [4Fe-4S] cluster as cofactor.

The protein resides in the cell inner membrane. It carries out the reaction a quinone + NADH + 5 H(+)(in) = a quinol + NAD(+) + 4 H(+)(out). In terms of biological role, NDH-1 shuttles electrons from NADH, via FMN and iron-sulfur (Fe-S) centers, to quinones in the respiratory chain. The immediate electron acceptor for the enzyme in this species is believed to be ubiquinone. Couples the redox reaction to proton translocation (for every two electrons transferred, four hydrogen ions are translocated across the cytoplasmic membrane), and thus conserves the redox energy in a proton gradient. The protein is NADH-quinone oxidoreductase subunit B 2 of Koribacter versatilis (strain Ellin345).